We begin with the raw amino-acid sequence, 41 residues long: Photosystem I reaction center subunit IX (41 aa).

The chain crosses the membrane as a helical span at residues 7-27; sequence YLSTAPVLLTLWMTFTAGFII.

Belongs to the PsaJ family.

It localises to the plastid. Its subcellular location is the chloroplast thylakoid membrane. Its function is as follows. May help in the organization of the PsaE and PsaF subunits. This Trieres chinensis (Marine centric diatom) protein is Photosystem I reaction center subunit IX.